Reading from the N-terminus, the 430-residue chain is Serine--tRNA ligase (430 aa).

Position 236–238 (236–238) interacts with L-serine; sequence TAE. 267–269 contributes to the ATP binding site; it reads RSE. Glu290 is a binding site for L-serine. ATP is bound at residue 354–357; that stretch reads EISS. Residue Ser390 coordinates L-serine.

This sequence belongs to the class-II aminoacyl-tRNA synthetase family. Type-1 seryl-tRNA synthetase subfamily. In terms of assembly, homodimer. The tRNA molecule binds across the dimer.

Its subcellular location is the cytoplasm. It carries out the reaction tRNA(Ser) + L-serine + ATP = L-seryl-tRNA(Ser) + AMP + diphosphate + H(+). The catalysed reaction is tRNA(Sec) + L-serine + ATP = L-seryl-tRNA(Sec) + AMP + diphosphate + H(+). Its pathway is aminoacyl-tRNA biosynthesis; selenocysteinyl-tRNA(Sec) biosynthesis; L-seryl-tRNA(Sec) from L-serine and tRNA(Sec): step 1/1. Catalyzes the attachment of serine to tRNA(Ser). Is also able to aminoacylate tRNA(Sec) with serine, to form the misacylated tRNA L-seryl-tRNA(Sec), which will be further converted into selenocysteinyl-tRNA(Sec). The sequence is that of Serine--tRNA ligase from Mannheimia succiniciproducens (strain KCTC 0769BP / MBEL55E).